A 281-amino-acid chain; its full sequence is MEMO1 family protein PAE0818 (281 aa).

Belongs to the MEMO1 family.

In Pyrobaculum aerophilum (strain ATCC 51768 / DSM 7523 / JCM 9630 / CIP 104966 / NBRC 100827 / IM2), this protein is MEMO1 family protein PAE0818.